Consider the following 253-residue polypeptide: UPF0280 protein Mbar_A3697 (253 aa).

This sequence belongs to the UPF0280 family.

The protein is UPF0280 protein Mbar_A3697 of Methanosarcina barkeri (strain Fusaro / DSM 804).